Reading from the N-terminus, the 127-residue chain is Two-component response regulator ORR41 (127 aa).

The Response regulatory domain occupies 7–125 (RVLLVEDEEI…KLGVILAKFR (119 aa)). Asp60 bears the 4-aspartylphosphate mark.

Belongs to the ARR family. Type-C subfamily. Two-component system major event consists of a His-to-Asp phosphorelay between a sensor histidine kinase (HK) and a response regulator (RR). In plants, the His-to-Asp phosphorelay involves an additional intermediate named Histidine-containing phosphotransfer protein (HPt). This multistep phosphorelay consists of a His-Asp-His-Asp sequential transfer of a phosphate group between first a His and an Asp of the HK protein, followed by the transfer to a conserved His of the HPt protein and finally the transfer to an Asp in the receiver domain of the RR protein.

Functionally, functions as a response regulator involved in His-to-Asp phosphorelay signal transduction system. Phosphorylation of the Asp residue in the receiver domain activates the ability of the protein to promote the transcription of target genes. May directly activate some type-A response regulators in response to cytokinins. This chain is Two-component response regulator ORR41, found in Oryza sativa subsp. japonica (Rice).